The primary structure comprises 733 residues: Phosphoribosylformylglycinamidine synthase subunit PurL (733 aa).

His44 is an active-site residue. ATP is bound by residues Tyr47 and Lys86. Residue Glu88 participates in Mg(2+) binding. Residues 89–92 (SHNH) and Arg111 contribute to the substrate site. The Proton acceptor role is filled by His90. Asp112 contacts Mg(2+). A substrate-binding site is contributed by Gln233. Position 261 (Asp261) interacts with Mg(2+). Substrate is bound at residue 305–307 (ESQ). ATP contacts are provided by Asp492 and Gly529. Asn530 contributes to the Mg(2+) binding site. Residue Ser532 participates in substrate binding.

It belongs to the FGAMS family. Monomer. Part of the FGAM synthase complex composed of 1 PurL, 1 PurQ and 2 PurS subunits.

The protein localises to the cytoplasm. The enzyme catalyses N(2)-formyl-N(1)-(5-phospho-beta-D-ribosyl)glycinamide + L-glutamine + ATP + H2O = 2-formamido-N(1)-(5-O-phospho-beta-D-ribosyl)acetamidine + L-glutamate + ADP + phosphate + H(+). It participates in purine metabolism; IMP biosynthesis via de novo pathway; 5-amino-1-(5-phospho-D-ribosyl)imidazole from N(2)-formyl-N(1)-(5-phospho-D-ribosyl)glycinamide: step 1/2. In terms of biological role, part of the phosphoribosylformylglycinamidine synthase complex involved in the purines biosynthetic pathway. Catalyzes the ATP-dependent conversion of formylglycinamide ribonucleotide (FGAR) and glutamine to yield formylglycinamidine ribonucleotide (FGAM) and glutamate. The FGAM synthase complex is composed of three subunits. PurQ produces an ammonia molecule by converting glutamine to glutamate. PurL transfers the ammonia molecule to FGAR to form FGAM in an ATP-dependent manner. PurS interacts with PurQ and PurL and is thought to assist in the transfer of the ammonia molecule from PurQ to PurL. The polypeptide is Phosphoribosylformylglycinamidine synthase subunit PurL (Thermomicrobium roseum (strain ATCC 27502 / DSM 5159 / P-2)).